A 428-amino-acid polypeptide reads, in one-letter code: Ribulose bisphosphate carboxylase (428 aa).

Lysine 151 acts as the Proton acceptor in catalysis. Lysine 153 contacts substrate. Residues lysine 177, aspartate 179, and glutamate 180 each contribute to the Mg(2+) site. Residue lysine 177 is modified to N6-carboxylysine. Histidine 270 serves as the catalytic Proton acceptor. Residues arginine 271, histidine 303, 354 to 356 (SGG), and 376 to 379 (QFGG) contribute to the substrate site.

This sequence belongs to the RuBisCO large chain family. Type III subfamily. In terms of assembly, homodimer. In contrast to form I RuBisCO, the form III RuBisCO is composed solely of large subunits. Mg(2+) is required as a cofactor.

It catalyses the reaction 2 (2R)-3-phosphoglycerate + 2 H(+) = D-ribulose 1,5-bisphosphate + CO2 + H2O. The catalysed reaction is D-ribulose 1,5-bisphosphate + O2 = 2-phosphoglycolate + (2R)-3-phosphoglycerate + 2 H(+). Its activity is regulated as follows. Reversibly inhibited by O(2). Catalyzes the addition of molecular CO(2) and H(2)O to ribulose 1,5-bisphosphate (RuBP), generating two molecules of 3-phosphoglycerate (3-PGA). Functions in an archaeal AMP degradation pathway, together with AMP phosphorylase and R15P isomerase. This chain is Ribulose bisphosphate carboxylase, found in Methanosarcina acetivorans (strain ATCC 35395 / DSM 2834 / JCM 12185 / C2A).